Here is a 308-residue protein sequence, read N- to C-terminus: tRNA pseudouridine synthase B (308 aa).

The active-site Nucleophile is the aspartate 49.

This sequence belongs to the pseudouridine synthase TruB family. Type 1 subfamily.

The catalysed reaction is uridine(55) in tRNA = pseudouridine(55) in tRNA. Its function is as follows. Responsible for synthesis of pseudouridine from uracil-55 in the psi GC loop of transfer RNAs. The sequence is that of tRNA pseudouridine synthase B from Corynebacterium jeikeium (strain K411).